A 307-amino-acid chain; its full sequence is UDP-N-acetylenolpyruvoylglucosamine reductase (307 aa).

One can recognise an FAD-binding PCMH-type domain in the interval 33–197 (TGGNADFYIT…LEAAFTLAPG (165 aa)). Arginine 176 is an active-site residue. The active-site Proton donor is the serine 226. The active site involves glutamate 296.

This sequence belongs to the MurB family. It depends on FAD as a cofactor.

Its subcellular location is the cytoplasm. It catalyses the reaction UDP-N-acetyl-alpha-D-muramate + NADP(+) = UDP-N-acetyl-3-O-(1-carboxyvinyl)-alpha-D-glucosamine + NADPH + H(+). It functions in the pathway cell wall biogenesis; peptidoglycan biosynthesis. Cell wall formation. The polypeptide is UDP-N-acetylenolpyruvoylglucosamine reductase (Staphylococcus aureus (strain Mu3 / ATCC 700698)).